Consider the following 388-residue polypeptide: LL-diaminopimelate aminotransferase (388 aa).

Substrate-binding residues include Tyr16 and Gly41. Residues Tyr70, 104–105, Tyr129, Asn179, Tyr210, and 239–241 each bind pyridoxal 5'-phosphate; these read SK and SLS. Substrate contacts are provided by Lys105, Tyr129, and Asn179. Lys242 is subject to N6-(pyridoxal phosphate)lysine. Arg250 provides a ligand contact to pyridoxal 5'-phosphate. Arg368 is a binding site for substrate.

This sequence belongs to the class-I pyridoxal-phosphate-dependent aminotransferase family. LL-diaminopimelate aminotransferase subfamily. As to quaternary structure, homodimer. Pyridoxal 5'-phosphate is required as a cofactor.

The catalysed reaction is (2S,6S)-2,6-diaminopimelate + 2-oxoglutarate = (S)-2,3,4,5-tetrahydrodipicolinate + L-glutamate + H2O + H(+). The protein operates within amino-acid biosynthesis; L-lysine biosynthesis via DAP pathway; LL-2,6-diaminopimelate from (S)-tetrahydrodipicolinate (aminotransferase route): step 1/1. Functionally, involved in the synthesis of meso-diaminopimelate (m-DAP or DL-DAP), required for both lysine and peptidoglycan biosynthesis. Catalyzes the direct conversion of tetrahydrodipicolinate to LL-diaminopimelate. The polypeptide is LL-diaminopimelate aminotransferase (Oleidesulfovibrio alaskensis (strain ATCC BAA-1058 / DSM 17464 / G20) (Desulfovibrio alaskensis)).